The sequence spans 403 residues: S-adenosylmethionine synthase (403 aa).

Residue H17 participates in ATP binding. A Mg(2+)-binding site is contributed by D19. E45 contacts K(+). E58 and Q104 together coordinate L-methionine. Residues 104 to 114 (QSPDIAQGVDT) form a flexible loop region. ATP contacts are provided by residues 179–181 (DGK), 250–251 (KF), D259, 265–266 (RK), A282, and K286. D259 provides a ligand contact to L-methionine. Position 290 (K290) interacts with L-methionine.

The protein belongs to the AdoMet synthase family. Homotetramer; dimer of dimers. Requires Mg(2+) as cofactor. It depends on K(+) as a cofactor.

The protein localises to the cytoplasm. It carries out the reaction L-methionine + ATP + H2O = S-adenosyl-L-methionine + phosphate + diphosphate. It participates in amino-acid biosynthesis; S-adenosyl-L-methionine biosynthesis; S-adenosyl-L-methionine from L-methionine: step 1/1. Its function is as follows. Catalyzes the formation of S-adenosylmethionine (AdoMet) from methionine and ATP. The overall synthetic reaction is composed of two sequential steps, AdoMet formation and the subsequent tripolyphosphate hydrolysis which occurs prior to release of AdoMet from the enzyme. The polypeptide is S-adenosylmethionine synthase (Mycobacterium tuberculosis (strain ATCC 25177 / H37Ra)).